The chain runs to 125 residues: Ribonuclease P protein component (125 aa).

This sequence belongs to the RnpA family. As to quaternary structure, consists of a catalytic RNA component (M1 or rnpB) and a protein subunit.

It catalyses the reaction Endonucleolytic cleavage of RNA, removing 5'-extranucleotides from tRNA precursor.. Its function is as follows. RNaseP catalyzes the removal of the 5'-leader sequence from pre-tRNA to produce the mature 5'-terminus. It can also cleave other RNA substrates such as 4.5S RNA. The protein component plays an auxiliary but essential role in vivo by binding to the 5'-leader sequence and broadening the substrate specificity of the ribozyme. This is Ribonuclease P protein component from Idiomarina loihiensis (strain ATCC BAA-735 / DSM 15497 / L2-TR).